The primary structure comprises 436 residues: Trigger factor (436 aa).

The PPIase FKBP-type domain maps to 161 to 248 (TDRVTIDLYG…LKKVEQYRLP (88 aa)).

It belongs to the FKBP-type PPIase family. Tig subfamily.

The protein resides in the cytoplasm. The enzyme catalyses [protein]-peptidylproline (omega=180) = [protein]-peptidylproline (omega=0). In terms of biological role, involved in protein export. Acts as a chaperone by maintaining the newly synthesized protein in an open conformation. Functions as a peptidyl-prolyl cis-trans isomerase. The polypeptide is Trigger factor (Baumannia cicadellinicola subsp. Homalodisca coagulata).